Consider the following 110-residue polypeptide: Small ribosomal subunit protein bS16 (110 aa).

Residues 79–110 (AAGVKKREARNNPQKAVPRKERKAQAEAAAKG) are disordered.

The protein belongs to the bacterial ribosomal protein bS16 family.

This Bradyrhizobium diazoefficiens (strain JCM 10833 / BCRC 13528 / IAM 13628 / NBRC 14792 / USDA 110) protein is Small ribosomal subunit protein bS16.